The chain runs to 431 residues: Glutamate-1-semialdehyde 2,1-aminomutase (431 aa).

The residue at position 269 (K269) is an N6-(pyridoxal phosphate)lysine.

Belongs to the class-III pyridoxal-phosphate-dependent aminotransferase family. HemL subfamily. Homodimer. It depends on pyridoxal 5'-phosphate as a cofactor.

Its subcellular location is the cytoplasm. It carries out the reaction (S)-4-amino-5-oxopentanoate = 5-aminolevulinate. It functions in the pathway porphyrin-containing compound metabolism; protoporphyrin-IX biosynthesis; 5-aminolevulinate from L-glutamyl-tRNA(Glu): step 2/2. Its pathway is porphyrin-containing compound metabolism; chlorophyll biosynthesis. This chain is Glutamate-1-semialdehyde 2,1-aminomutase, found in Chlorobium phaeovibrioides (strain DSM 265 / 1930) (Prosthecochloris vibrioformis (strain DSM 265)).